A 1412-amino-acid polypeptide reads, in one-letter code: MKALLDLFKQVQQEEIFDAIKIGLASPDKIRSWSFGEVKKPETINYRTFKPERDGLFCAKIFGPIKDYECLCGKYKRLKHRGVICEKCGVEVTLAKVRRERMGHIELASPVAHIWFLKSLPSRLGMVLDMTLRDIERVLYFEAYVVIDPGMTPLKARQIMTEEDYYNKVEEYGDEFRAEMGAEGVRELLRSINIDEQVETLRTELKNTGSEAKIKKYAKRLKVLEAFQRSGIKPDWMILEVLPVLPPELRPLVPLDGGRFATSDLNDLYRRVINRNNRLKRLLELKAPEIIVRNEKRMLQEAVDSLLDNGRRGKAMTGANKRPLKSLADMIKGKGGRFRQNLLGKRVDYSGRSVIVVGPTLKLHQCGLPKLMALELFKPFIFNKLEVMGVATTIKAAKKEVENQTPVVWDILEEVIREHPVMLNRAPTLHRLGIQAFEPVLIEGKAIQLHPLVCAAFNADFDGDQMAVHVPLSLEAQMEARTLMLASNNVLFPANGDPSIVPSQDIVLGLYYATREAINGKGEGLSFTGVSEVIRAYENKEVELASRVNVRITEMVRNEDTSEGAPQFVPKISLYATTVGRAILSEILPPGLPFSVLNKPLKKKEISRLINTAFRKCGLRATVVFADQLMQSGFRLATRAGISICVDDMLVPTQKETIVGDAAKKVKEYDRQYMSGLVTAQERYNNVVDIWSATSEAVGKAMMEQLSTEPVIDRGGNETRQESFNSIYMMADSGARGSAVQIRQLAGMRGLMAKPDGSIIETPITANFREGLNVLQYFISTHGARKGLADTALKTANSGYLTRRLVDVTQDLVVVEDDCGTSNGVAMKALVEGGEVVEALRDRILGRVAASDVVNPETQETLYEAGALLDETAVEDIERLGIDEVRVRTALTCETRYGLCASCYGRDLGRGSLVNVGEAVGVIAAQSIGEPGTQLTMRTFHIGGAASRAAVASSVEAKSNGTVRFTASMRYVTNAKGEQIVISRSGEALITDDIGRERERHKIPYGATLLQLDGAAIKAGTQLATWDPLTRPIITEYGGTVKFENVEEGVTVAKQIDDVTGLSTLVVIDVKRRGSQAAKSVRPQVKLLDANGDEVKIPGTEHAVQIGFQVGALITVKDGQQVQVGEVLARIPTESQKTRDITGGLPRVAELFEARSPKDAGILAEVTGTVSFGKDTKGKQRLVITDLEGNQHEFLIAKEKQVLVHDGQVVNKGEMIVDGPADPHDILRLQGIEALSRYIVDEVQDVYRLQGVKINDKHIEVIVRQMLRRVQIVDNGDTRFIPGEQVERSDMLDENDRMIAEDKRPATYDNILLGITKASLSTDSFISAASFQETTRVLTEAAIMGKRDDLRGLKENVIVGRLIPAGTGLAFHKARKAKEQSDRERFDQIAAEEAFEFGTPSAPAEEPQHPAE.

Zn(2+) is bound by residues C70, C72, C85, and C88. 3 residues coordinate Mg(2+): D460, D462, and D464. 4 residues coordinate Zn(2+): C819, C893, C900, and C903. Residues 1393–1412 (EAFEFGTPSAPAEEPQHPAE) are disordered.

It belongs to the RNA polymerase beta' chain family. The RNAP catalytic core consists of 2 alpha, 1 beta, 1 beta' and 1 omega subunit. When a sigma factor is associated with the core the holoenzyme is formed, which can initiate transcription. It depends on Mg(2+) as a cofactor. Requires Zn(2+) as cofactor.

It carries out the reaction RNA(n) + a ribonucleoside 5'-triphosphate = RNA(n+1) + diphosphate. DNA-dependent RNA polymerase catalyzes the transcription of DNA into RNA using the four ribonucleoside triphosphates as substrates. This Burkholderia mallei (strain NCTC 10229) protein is DNA-directed RNA polymerase subunit beta'.